A 113-amino-acid polypeptide reads, in one-letter code: Large ribosomal subunit protein uL22 (113 aa).

Belongs to the universal ribosomal protein uL22 family. As to quaternary structure, part of the 50S ribosomal subunit.

Functionally, this protein binds specifically to 23S rRNA; its binding is stimulated by other ribosomal proteins, e.g. L4, L17, and L20. It is important during the early stages of 50S assembly. It makes multiple contacts with different domains of the 23S rRNA in the assembled 50S subunit and ribosome. Its function is as follows. The globular domain of the protein is located near the polypeptide exit tunnel on the outside of the subunit, while an extended beta-hairpin is found that lines the wall of the exit tunnel in the center of the 70S ribosome. The protein is Large ribosomal subunit protein uL22 of Xylella fastidiosa (strain M12).